The sequence spans 221 residues: Veficolin-1 (221 aa).

A signal peptide spans M1–G25. One can recognise a Collagen-like domain in the interval Q50 to A104. The tract at residues G54–A104 is disordered. Residues Q111–K221 form the Fibrinogen C-terminal domain. Cysteines 120 and 148 form a disulfide.

Belongs to the ficolin lectin family. Veficolin subfamily. In terms of tissue distribution, expressed by the mandibular venom duct.

The protein resides in the secreted. Functionally, initiates complement activation and/or interferes in platelet aggregation and/or blood coagulation. The protein is Veficolin-1 of Varanus komodoensis (Komodo dragon).